The primary structure comprises 393 residues: 4-O-methyl-glucuronoyl methylesterase (393 aa).

An N-terminal signal peptide occupies residues 1–19 (MKLSAALLAIAAFANVASA). Residue glutamine 20 is modified to Pyrrolidone carboxylic acid. A disulfide bond links cysteine 22 and cysteine 56. Asparagine 103 and asparagine 168 each carry an N-linked (GlcNAc...) asparagine glycan. The GXSYXG catalytic site motif motif lies at 203-208 (GCSRNG). 2 disulfides stabilise this stretch: cysteine 204–cysteine 340 and cysteine 236–cysteine 312. The active-site Nucleophile is the serine 205. Substrate is bound by residues lysine 209, glutamine 251, glutamate 259, and tryptophan 303. Histidine 339 serves as the catalytic Proton donor/acceptor.

Belongs to the carbohydrate esterase 15 (CE15) family.

It is found in the secreted. The enzyme catalyses a 4-O-methyl-alpha-D-glucuronosyl ester derivative + H2O = 4-O-methyl-alpha-D-glucuronate derivative + an alcohol + H(+). Its function is as follows. Glucuronoyl esterase which may play a significant role in biomass degradation, as it is considered to disconnect hemicellulose from lignin through the hydrolysis of the ester bond between 4-O-methyl-D-glucuronic acid residues of glucuronoxylans and aromatic alcohols of lignin. The protein is 4-O-methyl-glucuronoyl methylesterase of Schizophyllum commune (strain H4-8 / FGSC 9210) (Split gill fungus).